Reading from the N-terminus, the 328-residue chain is Phenylalanine--tRNA ligase alpha subunit (328 aa).

A Mg(2+)-binding site is contributed by Glu245.

This sequence belongs to the class-II aminoacyl-tRNA synthetase family. Phe-tRNA synthetase alpha subunit type 1 subfamily. In terms of assembly, tetramer of two alpha and two beta subunits. It depends on Mg(2+) as a cofactor.

It is found in the cytoplasm. It catalyses the reaction tRNA(Phe) + L-phenylalanine + ATP = L-phenylalanyl-tRNA(Phe) + AMP + diphosphate + H(+). This Helicobacter pylori (strain P12) protein is Phenylalanine--tRNA ligase alpha subunit.